We begin with the raw amino-acid sequence, 315 residues long: Olfactory receptor 3A1 (315 aa).

Topologically, residues 1–28 (MQPESGANGTVIAEFILLGLLEAPGLQP) are extracellular. Asn-8 is a glycosylation site (N-linked (GlcNAc...) asparagine). The helical transmembrane segment at 29 to 52 (VVFVLFLFAYLVTVRGNLSILAAV) threads the bilayer. Over 53–60 (LVEPKLHT) the chain is Cytoplasmic. Residues 61–82 (PMYFFLGNLSVLDVGCISVTVP) traverse the membrane as a helical segment. Topologically, residues 83-103 (SMLSRLLSRKRAVPCGACLTQ) are extracellular. Cysteines 100 and 192 form a disulfide. Residues 104 to 123 (LFFFHLFVGVDCFLLTAMAY) traverse the membrane as a helical segment. Residues 124–143 (DRFLAICRPLTYSTRMSQTV) lie on the Cytoplasmic side of the membrane. The chain crosses the membrane as a helical span at residues 144–161 (QRMLVAASWACAFTNALT). The Extracellular portion of the chain corresponds to 162–199 (HTVAMSTLNFCGPNVINHFYCDLPQLFQLSCSSTQLNE). Residues 200–223 (LLLFAVGFIMAGTPMALIVISYIH) traverse the membrane as a helical segment. Residues 224–240 (VAAAVLRIRSVEGRKKA) lie on the Cytoplasmic side of the membrane. Residues 241 to 264 (FSTCGSHLTVVAIFYGSGIFNYMR) traverse the membrane as a helical segment. The Extracellular portion of the chain corresponds to 265 to 275 (LGSTKLSDKDK). Residues 276-295 (AVGIFNTVINPMLNPIIYSF) traverse the membrane as a helical segment. At 296–315 (RNPDVQSAIWRMLTGRRSLA) the chain is on the cytoplasmic side.

Belongs to the G-protein coupled receptor 1 family.

Its subcellular location is the cell membrane. Its function is as follows. Odorant receptor. The polypeptide is Olfactory receptor 3A1 (OR3A1) (Homo sapiens (Human)).